The primary structure comprises 1125 residues: MLEADLVSKMLRAVLQSHKNGIALPRLQGEYRSLTGDWIPFKQLGYPTLEAYLRSVPAVVRIETSRSGEITCYAMACTETARIAQLVARQRSSKRKTGRQVNCQMRVKKTMPFFLEGKPKATLRQPGFSSDFSVSKKPNPTLLRDKGNSLGVKSDAEMPPYTLHTTLRSEVFKDVPVQRHVTMSTNNRVIPMCSHPDVDPLQYVGSVFKKHKYLRFSPKASLPPPFQMHLSRTCAKEMNGNLSQTVEKPNVTPPASYTYKMDEVQNRIKEILNKHNNGIWISKLPHFYKELYKEELNQGILQQFEHWPHICTVEKPGSGGQDLLLYPAKRKQLLRSELDGEKVPPSPLPAPKQIPPLKGCPAVMPGDFKEKVAELLTKYSSGLWASALPKAFEDMYKMKFPEDALKNLASLSDVCTIDYISGNPQKAILYAKLPLPTDKILKDAGQAHGDYDIKSMIEQEYLQIEENIAKSVDTFLENTAVPPLIIPTEASPSVLVVELSNTNEVVIRYVGKDYSAAQELMEDEMKEYYSKNPKVTPVQTVHVGQLLAVNAEEDAWLRAQIISTEENRIKVCYVDYGFSENIEKSKAYKLNPKFCSLSFQATKCKLAGLEVLSDDPDLVKVVESLTCGKIFAVEILEKADIPLVVLYDTSGDDDVNINATCLKAICDKSLEAHLQIDAMYTNVRVTNICSDGTLYCQVPCKGLNKLNDLLHKIEDYFHCKHMTSEYFVSLPFCGKVCLFHCKGKWLRVEITNVHSSRALDVQFLDSGTVTSVKVSELREIPPRFLQEIIVIPPQAIKCCLADLPQSIGMWTPDAVLWLRDSVLNCSDCSIKVTKVDETRGIAHIYLFTPKNFPDPHRSINRQITNADLWKHQKDVFLSAISSGTSSPNSKSGSTPVPGSTGDNFRKSLTDAIKKSVVDHTSSLSVEELPPPVHLSKPGEHMDVYVPVACHPGYFVIQPWQEIHKLEVLMEEMILYYSVSEERHVAVEKDQVYAAKVENKWHRVLLKGILTNGLVSVYELDYGKHELVNIRKVQPLAAVFRKLPFQAVTAQLAGVKCNQWSEEASMVFRNHVEKKPLVALVQTVIENANPWDRKVVVYLVDTSLPDTDIWIHDFMSEYLVELSKVN.

One can recognise an HTH OST-type 1 domain in the interval 3–76 (EADLVSKMLR…SGEITCYAMA (74 aa)). Residues 126–157 (PGFSSDFSVSKKPNPTLLRDKGNSLGVKSDAE) form a disordered region. Residues 127–138 (GFSSDFSVSKKP) show a composition bias toward polar residues. Positions 260-329 (KMDEVQNRIK…GQDLLLYPAK (70 aa)) constitute an HTH OST-type 2 domain. At S346 the chain carries Phosphoserine. In terms of domain architecture, HTH OST-type 3 spans 364–433 (MPGDFKEKVA…PQKAILYAKL (70 aa)). Tudor domains are found at residues 540 to 597 (TVHV…FCSL) and 730 to 787 (LPFC…FLQE). The span at 881–895 (SSGTSSPNSKSGSTP) shows a compositional bias: low complexity. Residues 881–904 (SSGTSSPNSKSGSTPVPGSTGDNF) are disordered. S886 is subject to Phosphoserine. The interaction with CDK17 stretch occupies residues 888-1125 (NSKSGSTPVP…EYLVELSKVN (238 aa)). An interaction with CABLES1 region spans residues 920-1125 (TSSLSVEELP…EYLVELSKVN (206 aa)).

It belongs to the TDRD7 family. In terms of assembly, found in a mRNP complex, at least composed of TDRD1, TDRD6, TDRD7 and DDX4. Found in a complex containing CABLES1, CDK16 and CDK17. Interacts with CABLES1, CDK17 and PIWIL1.

It localises to the cytoplasm. Functionally, component of specific cytoplasmic RNA granules involved in post-transcriptional regulation of specific genes: probably acts by binding to specific mRNAs and regulating their translation. Required for lens transparency during lens development, by regulating translation of genes such as CRYBB3 and HSPB1 in the developing lens. Also required during spermatogenesis. In Canis lupus familiaris (Dog), this protein is Tudor domain-containing protein 7 (TDRD7).